The chain runs to 153 residues: MALELALDLQFAVNPGNLPTEAEFETWVRVALGDTLDEAELTIRIVDATESQQLNRDYRGKDKPTNVLSFPFEAPPGMELPLLGDLVICASVVENEALEQHKALEAHWAHMVVHGCLHLLGYDHIDDAEAEEMEALETTLLTGLGYPDPYKEQ.

The Zn(2+) site is built by His114, His118, and His124.

Belongs to the endoribonuclease YbeY family. Requires Zn(2+) as cofactor.

Its subcellular location is the cytoplasm. Its function is as follows. Single strand-specific metallo-endoribonuclease involved in late-stage 70S ribosome quality control and in maturation of the 3' terminus of the 16S rRNA. This Shewanella amazonensis (strain ATCC BAA-1098 / SB2B) protein is Endoribonuclease YbeY.